The chain runs to 136 residues: Protein NrdI (136 aa).

This sequence belongs to the NrdI family.

Its function is as follows. Probably involved in ribonucleotide reductase function. The sequence is that of Protein NrdI from Escherichia coli O7:K1 (strain IAI39 / ExPEC).